The primary structure comprises 1435 residues: Neuropathy target esterase sws (1435 aa).

Topologically, residues 1–35 are lumenal; that stretch reads MDVLELLRVSGSNMYYSTFLADAWCYYISNQITMT. The helical transmembrane segment at 36-56 threads the bilayer; that stretch reads MYLYCALGVLSMLFIGWFVYF. The Cytoplasmic segment spans residues 57-1435; it reads KRLARLRLRH…NTNNETKNYL (1379 aa). 176–303 is a binding site for a nucleoside 3',5'-cyclic phosphate; the sequence is IFGHFEKPIF…IRVIQVIMIR (128 aa). Positions 361–372 are enriched in low complexity; it reads AASGTAGSTHTA. 2 disordered regions span residues 361-405 and 422-452; these read AASG…ELSG and NSYPPLYHQRESDGNLSTRRGSITQQEQPEV. The span at 435-449 shows a compositional bias: polar residues; sequence GNLSTRRGSITQQEQ. Serine 443 carries the phosphoserine modification. A nucleoside 3',5'-cyclic phosphate-binding positions include 474–601 and 590–717; these read ELGL…VVRR and IVLD…LSHR. Positions 944 to 1110 constitute a PNPLA domain; it reads LVLGGGGARG…VNNLPGHLWR (167 aa). The GXGXXG signature appears at 948–953; it reads GGGARG. Residues 975–979 carry the GXSXG motif; sequence GVSIG. Serine 977 (nucleophile) is an active-site residue. Residue aspartate 1097 is the Proton acceptor of the active site. The short motif at 1097–1099 is the DGA/G element; the sequence is DGG. The disordered stretch occupies residues 1308–1435; sequence MDKATQSTPP…NTNNETKNYL (128 aa). The segment covering 1311–1322 has biased composition (polar residues); the sequence is ATQSTPPLQSKA. Composition is skewed to basic and acidic residues over residues 1330-1361 and 1393-1424; these read SKEEARHEWEIKREQKQELAREQELERERELS and MDKKKTKDNDRDEVRGSAEDTGKEKEEDKENR. Polar residues predominate over residues 1425-1435; that stretch reads SNTNNETKNYL.

The protein belongs to the NTE family. In terms of assembly, interacts with Pka-C3; interaction inhibits the catalytic function of Pka-C3 and the esterase activity of sws.

It localises to the endoplasmic reticulum membrane. It carries out the reaction a 1-acyl-sn-glycero-3-phosphocholine + H2O = sn-glycerol 3-phosphocholine + a fatty acid + H(+). In terms of biological role, phospholipase B that deacylates intracellular phosphatidylcholine (PtdCho), generating glycerophosphocholine (GroPtdCho). This deacylation occurs at both sn-2 and sn-1 positions of PtdCho. Its specific chemical modification by certain organophosphorus (OP) compounds leads to distal axonopathy. Plays a role in the signaling mechanism between neurons and glia that regulates glia wrapping during development of the adult brain. Essential for membrane lipid homeostasis and cell survival in both neurons and glia of the adult brain. In Drosophila persimilis (Fruit fly), this protein is Neuropathy target esterase sws.